Here is a 208-residue protein sequence, read N- to C-terminus: dTTP/UTP pyrophosphatase (208 aa).

D78 functions as the Proton acceptor in the catalytic mechanism.

It belongs to the Maf family. YhdE subfamily. It depends on a divalent metal cation as a cofactor.

It is found in the cytoplasm. It carries out the reaction dTTP + H2O = dTMP + diphosphate + H(+). It catalyses the reaction UTP + H2O = UMP + diphosphate + H(+). Its function is as follows. Nucleoside triphosphate pyrophosphatase that hydrolyzes dTTP and UTP. May have a dual role in cell division arrest and in preventing the incorporation of modified nucleotides into cellular nucleic acids. This Maricaulis maris (strain MCS10) (Caulobacter maris) protein is dTTP/UTP pyrophosphatase.